The sequence spans 307 residues: Aspartate carbamoyltransferase catalytic subunit (307 aa).

Carbamoyl phosphate contacts are provided by Arg58 and Thr59. L-aspartate is bound at residue Lys86. Positions 108, 136, and 139 each coordinate carbamoyl phosphate. Positions 169 and 223 each coordinate L-aspartate. Carbamoyl phosphate is bound by residues Gly264 and Pro265.

Belongs to the aspartate/ornithine carbamoyltransferase superfamily. ATCase family. In terms of assembly, heterododecamer (2C3:3R2) of six catalytic PyrB chains organized as two trimers (C3), and six regulatory PyrI chains organized as three dimers (R2).

It catalyses the reaction carbamoyl phosphate + L-aspartate = N-carbamoyl-L-aspartate + phosphate + H(+). Its pathway is pyrimidine metabolism; UMP biosynthesis via de novo pathway; (S)-dihydroorotate from bicarbonate: step 2/3. In terms of biological role, catalyzes the condensation of carbamoyl phosphate and aspartate to form carbamoyl aspartate and inorganic phosphate, the committed step in the de novo pyrimidine nucleotide biosynthesis pathway. In Syntrophus aciditrophicus (strain SB), this protein is Aspartate carbamoyltransferase catalytic subunit.